The primary structure comprises 488 residues: Probable phenylalanine--tRNA ligase alpha subunit (488 aa).

The tract at residues 1 to 146 (MSIEQDILNL…KRKLVDINKK (146 aa)) is contains the major tRNA-Phe binding sites. Residues T315, 363-365 (QVE), and Y403 each bind L-phenylalanine. Residue E405 participates in Mg(2+) binding. F429 contributes to the L-phenylalanine binding site.

Belongs to the class-II aminoacyl-tRNA synthetase family. Phe-tRNA synthetase alpha subunit type 2 subfamily. Tetramer of two alpha and two beta subunits. Mg(2+) serves as cofactor.

It is found in the cytoplasm. It carries out the reaction tRNA(Phe) + L-phenylalanine + ATP = L-phenylalanyl-tRNA(Phe) + AMP + diphosphate + H(+). In Enterocytozoon bieneusi (strain H348) (Microsporidian parasite), this protein is Probable phenylalanine--tRNA ligase alpha subunit.